Here is a 628-residue protein sequence, read N- to C-terminus: (-)-beta-pinene synthase 1, chloroplastic (628 aa).

A chloroplast-targeting transit peptide spans 1–51 (MDLISVLPSASKSCVCLHKPLSSSTHKLKPFCRTIRILGMPRPRKSVLMVS). Residues Asp-379, Asp-383, and Asp-531 each coordinate Mg(2+). Residues 379-383 (DDMYD) carry the DDXXD motif motif.

It belongs to the terpene synthase family. Tpsd subfamily. Requires Mg(2+) as cofactor. It depends on Mn(2+) as a cofactor.

The protein resides in the plastid. It localises to the chloroplast. It catalyses the reaction (2E)-geranyl diphosphate = (1S,5S)-beta-pinene + diphosphate. The enzyme catalyses (2E)-geranyl diphosphate = (1S,5S)-alpha-pinene + diphosphate. It functions in the pathway terpene metabolism; oleoresin biosynthesis. It participates in secondary metabolite biosynthesis; terpenoid biosynthesis. Monoterpene synthase (TPS) involved in the biosynthesis of monoterpene natural products included in conifer oleoresin secretions and volatile emissions; these compounds contribute to biotic and abiotic stress defense against herbivores and pathogens. Catalyzes the conversion of (2E)-geranyl diphosphate (GPP) to (-)-beta-pinene and, to a lower extent, to (-)-alpha-pinene. The chain is (-)-beta-pinene synthase 1, chloroplastic from Pinus banksiana (Jack pine).